A 548-amino-acid polypeptide reads, in one-letter code: Asparagine--tRNA ligase, cytoplasmic (548 aa).

A disordered region spans residues 1-25 (MVLAELYVSDREGSDATGDGTKEKP). The segment covering 8–25 (VSDREGSDATGDGTKEKP) has biased composition (basic and acidic residues). The residue at position 61 (S61) is a Phosphoserine. A disordered region spans residues 69–91 (MWHREQMKSESREKKEAEDSLRR). Positions 71–91 (HREQMKSESREKKEAEDSLRR) are enriched in basic and acidic residues. An N6-acetyllysine modification is found at K244. S482 carries the phosphoserine modification. N6-acetyllysine is present on K490.

Belongs to the class-II aminoacyl-tRNA synthetase family. In terms of assembly, homodimer.

Its subcellular location is the cytoplasm. The catalysed reaction is tRNA(Asn) + L-asparagine + ATP = L-asparaginyl-tRNA(Asn) + AMP + diphosphate + H(+). Catalyzes the attachment of asparagine to tRNA(Asn) in a two-step reaction: asparagine is first activated by ATP to form Asn-AMP and then transferred to the acceptor end of tRNA(Asn). In addition to its essential role in protein synthesis, acts as a signaling molecule that induced migration of CCR3-expressing cells. Has an essential role in the development of the cerebral cortex, being required for proper proliferation of radial glial cells. In Homo sapiens (Human), this protein is Asparagine--tRNA ligase, cytoplasmic.